A 156-amino-acid chain; its full sequence is MNINATLIGQTIAFIVFVWFCMKFVWPPIIKAIEERQKKIADGLNAGERAQKDLEKAQQEIAEQLKEAKQQAAEIIEQSKKRGAKIVEEETQRGHEEREKIVAAGHEEVAAERNRVREELRKQVAVLAVSGAQKIIEREIDKDAHSDIVEKLVAEL.

A helical transmembrane segment spans residues Leu-7–Pro-27.

This sequence belongs to the ATPase B chain family. In terms of assembly, F-type ATPases have 2 components, F(1) - the catalytic core - and F(0) - the membrane proton channel. F(1) has five subunits: alpha(3), beta(3), gamma(1), delta(1), epsilon(1). F(0) has three main subunits: a(1), b(2) and c(10-14). The alpha and beta chains form an alternating ring which encloses part of the gamma chain. F(1) is attached to F(0) by a central stalk formed by the gamma and epsilon chains, while a peripheral stalk is formed by the delta and b chains.

It localises to the cell inner membrane. In terms of biological role, f(1)F(0) ATP synthase produces ATP from ADP in the presence of a proton or sodium gradient. F-type ATPases consist of two structural domains, F(1) containing the extramembraneous catalytic core and F(0) containing the membrane proton channel, linked together by a central stalk and a peripheral stalk. During catalysis, ATP synthesis in the catalytic domain of F(1) is coupled via a rotary mechanism of the central stalk subunits to proton translocation. Component of the F(0) channel, it forms part of the peripheral stalk, linking F(1) to F(0). The protein is ATP synthase subunit b of Idiomarina loihiensis (strain ATCC BAA-735 / DSM 15497 / L2-TR).